Reading from the N-terminus, the 383-residue chain is Chaperone protein DnaJ (383 aa).

Residues 6-70 enclose the J domain; the sequence is DYYDVLGVGR…QKRAAYDQYG (65 aa). The segment at 140-222 adopts a CR-type zinc-finger fold; sequence GKETKISYSR…CHGTGREEER (83 aa). 8 residues coordinate Zn(2+): cysteine 153, cysteine 156, cysteine 170, cysteine 173, cysteine 196, cysteine 199, cysteine 210, and cysteine 213. CXXCXGXG motif repeat units follow at residues 153-160, 170-177, 196-203, and 210-217; these read CHTCHGSG, CHKCHGAG, CDVCGGTG, and CDTCHGTG.

It belongs to the DnaJ family. As to quaternary structure, homodimer. The cofactor is Zn(2+).

The protein localises to the cytoplasm. Participates actively in the response to hyperosmotic and heat shock by preventing the aggregation of stress-denatured proteins and by disaggregating proteins, also in an autonomous, DnaK-independent fashion. Unfolded proteins bind initially to DnaJ; upon interaction with the DnaJ-bound protein, DnaK hydrolyzes its bound ATP, resulting in the formation of a stable complex. GrpE releases ADP from DnaK; ATP binding to DnaK triggers the release of the substrate protein, thus completing the reaction cycle. Several rounds of ATP-dependent interactions between DnaJ, DnaK and GrpE are required for fully efficient folding. Also involved, together with DnaK and GrpE, in the DNA replication of plasmids through activation of initiation proteins. In Latilactobacillus sakei (Lactobacillus sakei), this protein is Chaperone protein DnaJ.